A 586-amino-acid chain; its full sequence is Aspartate--tRNA(Asp/Asn) ligase (586 aa).

E172 lines the L-aspartate pocket. The segment at 196-199 (QLYK) is aspartate. R218 contributes to the L-aspartate binding site. ATP is bound by residues 218 to 220 (RDE) and Q227. H446 lines the L-aspartate pocket. Residue E480 coordinates ATP. Position 487 (R487) interacts with L-aspartate. ATP is bound at residue 532–535 (GIDR).

This sequence belongs to the class-II aminoacyl-tRNA synthetase family. Type 1 subfamily. As to quaternary structure, homodimer.

Its subcellular location is the cytoplasm. The enzyme catalyses tRNA(Asx) + L-aspartate + ATP = L-aspartyl-tRNA(Asx) + AMP + diphosphate. Aspartyl-tRNA synthetase with relaxed tRNA specificity since it is able to aspartylate not only its cognate tRNA(Asp) but also tRNA(Asn). Reaction proceeds in two steps: L-aspartate is first activated by ATP to form Asp-AMP and then transferred to the acceptor end of tRNA(Asp/Asn). In Borreliella afzelii (strain PKo) (Borrelia afzelii), this protein is Aspartate--tRNA(Asp/Asn) ligase.